The following is a 145-amino-acid chain: Transcription antitermination protein NusB (145 aa).

The protein belongs to the NusB family.

Involved in transcription antitermination. Required for transcription of ribosomal RNA (rRNA) genes. Binds specifically to the boxA antiterminator sequence of the ribosomal RNA (rrn) operons. The sequence is that of Transcription antitermination protein NusB from Acetivibrio thermocellus (strain ATCC 27405 / DSM 1237 / JCM 9322 / NBRC 103400 / NCIMB 10682 / NRRL B-4536 / VPI 7372) (Clostridium thermocellum).